The primary structure comprises 301 residues: Pantothenate synthetase (301 aa).

30-37 (MGNLHEGH) serves as a coordination point for ATP. H37 acts as the Proton donor in catalysis. Q61 is a binding site for (R)-pantoate. Beta-alanine is bound at residue Q61. Residue 149 to 152 (GEKD) coordinates ATP. Q155 is a binding site for (R)-pantoate. ATP-binding positions include V178 and 186–189 (MSSR).

The protein belongs to the pantothenate synthetase family. As to quaternary structure, homodimer.

It localises to the cytoplasm. It carries out the reaction (R)-pantoate + beta-alanine + ATP = (R)-pantothenate + AMP + diphosphate + H(+). The protein operates within cofactor biosynthesis; (R)-pantothenate biosynthesis; (R)-pantothenate from (R)-pantoate and beta-alanine: step 1/1. Functionally, catalyzes the condensation of pantoate with beta-alanine in an ATP-dependent reaction via a pantoyl-adenylate intermediate. The sequence is that of Pantothenate synthetase from Vibrio parahaemolyticus serotype O3:K6 (strain RIMD 2210633).